Reading from the N-terminus, the 506-residue chain is Galactose/methyl galactoside import ATP-binding protein MglA (506 aa).

2 ABC transporter domains span residues 14–249 and 264–506; these read LTMT…VGRE and VILE…AKYL. 46-53 is a binding site for ATP; it reads GENGAGKS.

The protein belongs to the ABC transporter superfamily. Galactose/methyl galactoside importer (TC 3.A.1.2.3) family. The complex is composed of one ATP-binding protein (MglA), two transmembrane proteins (MglC) and a solute-binding protein (MglB).

It localises to the cell inner membrane. The enzyme catalyses D-galactose(out) + ATP + H2O = D-galactose(in) + ADP + phosphate + H(+). The catalysed reaction is methyl beta-D-galactoside(out) + ATP + H2O = methyl beta-D-galactoside(in) + ADP + phosphate + H(+). Functionally, part of the ABC transporter complex MglABC involved in galactose/methyl galactoside import. Responsible for energy coupling to the transport system. The sequence is that of Galactose/methyl galactoside import ATP-binding protein MglA from Mannheimia succiniciproducens (strain KCTC 0769BP / MBEL55E).